The following is a 609-amino-acid chain: Aminopeptidase ltah-1.1 (609 aa).

Substrate-binding positions include glutamine 137–glutamine 139 and proline 268–glutamate 273. Histidine 297 is a binding site for Zn(2+). The active-site Proton acceptor is the glutamate 298. Positions 301 and 320 each coordinate Zn(2+). The Proton donor role is filled by tyrosine 387. Arginine 564–lysine 566 provides a ligand contact to substrate.

Belongs to the peptidase M1 family. Requires Zn(2+) as cofactor.

The protein resides in the cytoplasm. It carries out the reaction Release of N-terminal Arg and Lys from oligopeptides when P1' is not Pro. Also acts on arylamides of Arg and Lys.. Its function is as follows. Aminopeptidase which preferentially removes N-terminal Arg and Lys residues from peptides and proteins. The chain is Aminopeptidase ltah-1.1 from Caenorhabditis elegans.